The sequence spans 365 residues: Caffeic acid 3-O-methyltransferase (365 aa).

Asparagine 133 serves as a coordination point for (E)-ferulate. Residues glycine 210, aspartate 233, aspartate 253, methionine 254, methionine 266, and lysine 267 each coordinate S-adenosyl-L-homocysteine. Residue histidine 271 is the Proton acceptor of the active site. Aspartate 272 contacts (E)-5-hydroxyferulate.

It belongs to the class I-like SAM-binding methyltransferase superfamily. Cation-independent O-methyltransferase family. COMT subfamily. In terms of assembly, homodimer.

The catalysed reaction is (E)-caffeate + S-adenosyl-L-methionine = (E)-ferulate + S-adenosyl-L-homocysteine + H(+). The enzyme catalyses (E)-5-hydroxyferulate + S-adenosyl-L-methionine = (E)-sinapate + S-adenosyl-L-homocysteine + H(+). Its pathway is aromatic compound metabolism; phenylpropanoid biosynthesis. With respect to regulation, inhibited by Cu(2+), and to a lesser extent by Ni(2+), Mn(2+), Co(2+), Fe(3+) and Zn(2+). Unaffected by Fe(2+) and Mg(2+). In terms of biological role, catalyzes the conversion of caffeic acid to ferulic acid and of 5-hydroxyferulic acid to sinapic acid. The resulting products may subsequently be converted to the corresponding alcohols that are incorporated into lignins. This Ammi majus (Bishop's weed) protein is Caffeic acid 3-O-methyltransferase.